The following is a 424-amino-acid chain: MTQMEMARKGIVSEEMKKVAEYEGVDVEEVRQKIAEGRAVLPKNKLHRVSKPMIVGEGFSVKVNANIGTSQGFSSIEEEKEKARVAIEYGADSLMVLSTWGDLREIRRTIVEMSPVPVGSVPIYDSAVKSYQMKKNVVDFSEKDFFDMVIAHAEDGIDFMTIHVGVTRRVLERVKNSKRILKIVSRGGAIIAGWMIKNNRENPFYEHFDELLDIAKEYDITLSLGDGMRPGAVVDASDSQQFEELFVMGELVERAREKEVQVMLEGPGHVPLNEVEMNVKLMKKVGKGVPIFLLGPLPTDRAMGYDHIACAIGGALAGYYGADFLCYVTPSEHISLPDVEDVREGVIASKIAAVVADVARGNRKAWELEKRMALARKNFDWETMFDLSLGRDIAKKKYEERPYPDKGCSMCGPFCAIKIAEEFS.

Substrate-binding positions include asparagine 66, methionine 95, tyrosine 124, histidine 163, 185–187 (SRG), 226–229 (DGMR), and glutamate 265. Zn(2+) is bound at residue histidine 269. Phenylalanine 292 serves as a coordination point for substrate. Histidine 333 provides a ligand contact to Zn(2+). Residues cysteine 408, cysteine 411, and cysteine 415 each coordinate [4Fe-4S] cluster.

It belongs to the ThiC family. It depends on [4Fe-4S] cluster as a cofactor.

The catalysed reaction is 5-amino-1-(5-phospho-beta-D-ribosyl)imidazole + S-adenosyl-L-methionine = 4-amino-2-methyl-5-(phosphooxymethyl)pyrimidine + CO + 5'-deoxyadenosine + formate + L-methionine + 3 H(+). It participates in cofactor biosynthesis; thiamine diphosphate biosynthesis. Functionally, catalyzes the synthesis of the hydroxymethylpyrimidine phosphate (HMP-P) moiety of thiamine from aminoimidazole ribotide (AIR) in a radical S-adenosyl-L-methionine (SAM)-dependent reaction. The sequence is that of Phosphomethylpyrimidine synthase from Thermotoga neapolitana (strain ATCC 49049 / DSM 4359 / NBRC 107923 / NS-E).